Reading from the N-terminus, the 120-residue chain is Spermidine export protein MdtJ (120 aa).

A run of 4 helical transmembrane segments spans residues 1–21 (MFYW…TLSM), 31–51 (TGFI…AFAV), 54–74 (IALG…ITLF), and 81–101 (ESLS…IVLI).

The protein belongs to the drug/metabolite transporter (DMT) superfamily. Small multidrug resistance (SMR) (TC 2.A.7.1) family. MdtJ subfamily. In terms of assembly, forms a complex with MdtI.

It localises to the cell inner membrane. Catalyzes the excretion of spermidine. The polypeptide is Spermidine export protein MdtJ (Klebsiella pneumoniae subsp. pneumoniae (strain ATCC 700721 / MGH 78578)).